A 56-amino-acid chain; its full sequence is Large ribosomal subunit protein bL33c (56 aa).

This sequence belongs to the bacterial ribosomal protein bL33 family.

The protein localises to the plastid. It localises to the chloroplast. The protein is Large ribosomal subunit protein bL33c (rpl33) of Guillardia theta (Cryptophyte).